Consider the following 87-residue polypeptide: Omega-lycotoxin-Am1b (87 aa).

An N-terminal signal peptide occupies residues 1 to 17; the sequence is MKLSIFFVLFFIAIAYC. Positions 18 to 40 are excised as a propeptide; the sequence is QPEFLDDEEDEVEETLPVAEEGR. 4 cysteine pairs are disulfide-bonded: C44–C59, C51–C64, C58–C84, and C66–C82.

Belongs to the neurotoxin omega-lctx family. As to expression, expressed by the venom gland.

The protein localises to the secreted. Modulates Cav2.1/CACNA1A voltage-gated calcium channels (P/Q-type currents) in rat cerebellar Purkinje cells and hippocampal CA1-CA3 neurons. At saturating concentrations (&gt;10 nM) decelerates activation kinetics and slightly increases peak amplitude without affecting deactivation kinetics. In vivo, does not cause death when intravenously injected into mice. In rat models, through its activity on Cav2.1/CACNA1A, has an ameliorative effect on memory defects provoked by hyperstimulation of N-methyl-D-aspartate receptors (NMDARs) in the hippocampus. This chain is Omega-lycotoxin-Am1b, found in Alopecosa marikovskyi (Wolf spider).